The sequence spans 733 residues: Ferric aerobactin receptor (733 aa).

The first 25 residues, 1–25, serve as a signal peptide directing secretion; sequence MMISKKYTLWALNPLLLTMMAPAVA. The short motif at 31 to 38 is the TonB box element; that stretch reads ETFVVSAN. A TBDR plug domain is found at 43 to 153; it reads TVAEMAQTTW…TGGLINIVTK (111 aa). A TBDR beta-barrel domain is found at 158-733; it reads ETIMEFEAGT…TFGLNYSVLF (576 aa). The short motif at 716–733 is the TonB C-terminal box element; it reads YDYKGRGRTFGLNYSVLF.

This sequence belongs to the TonB-dependent receptor family.

Its subcellular location is the cell outer membrane. Receptor for aerobactin. In Klebsiella pneumoniae, this protein is Ferric aerobactin receptor (iutA).